Here is a 419-residue protein sequence, read N- to C-terminus: Endochitinase 2 (419 aa).

A signal peptide spans 1–18 (MHHLRALVGVGLAGLAAG). The GH18 domain occupies 35–343 (AQNVVYWGQN…QQAKSILVNG (309 aa)). A glycan (N-linked (GlcNAc...) asparagine) is linked at asparagine 153. Glutamate 173 serves as the catalytic Proton donor. 2 N-linked (GlcNAc...) asparagine glycosylation sites follow: asparagine 237 and asparagine 256. Over residues 350-381 (GPPSSTPATAPAPTATTMPSSTSVSSPAASPT) the composition is skewed to low complexity. The interval 350–386 (GPPSSTPATAPAPTATTMPSSTSVSSPAASPTGGTVP) is disordered. A CBM1 domain is found at 383-419 (GTVPQWGQCGGEGYSGPTQCVAPYQCVKQGDWWSSCR).

Belongs to the glycosyl hydrolase 18 family. Chitinase class III subfamily.

The protein resides in the secreted. It carries out the reaction Random endo-hydrolysis of N-acetyl-beta-D-glucosaminide (1-&gt;4)-beta-linkages in chitin and chitodextrins.. Its function is as follows. Secreted chitinase involved in the degradation of chitin, a component of the cell walls of fungi and exoskeletal elements of some animals (including worms and arthropods). Participates in the infection process and directly acts in the penetration process of the host cuticle. This Metarhizium robertsii (strain ARSEF 23 / ATCC MYA-3075) (Metarhizium anisopliae (strain ARSEF 23)) protein is Endochitinase 2 (chi2).